An 856-amino-acid polypeptide reads, in one-letter code: Phosphatidylglycerol lysyltransferase (856 aa).

13 helical membrane passes run 7 to 27 (ALSI…IYQS), 51 to 71 (LFML…YDYV), 88 to 108 (VSWI…AGVG), 128 to 148 (IAWL…FVAA), 161 to 181 (PWLW…LAVS), 208 to 228 (SVVE…AMGI), 235 to 255 (VFGV…PGGF), 280 to 300 (IVLY…FFAA), 342 to 362 (SLSL…SLPI), 375 to 395 (ALLL…ILPI), 420 to 440 (FLKG…VLLV), 459 to 479 (IFAV…AGFI), and 501 to 521 (HATI…TVVY).

This sequence belongs to the LPG synthase family.

The protein localises to the cell membrane. The catalysed reaction is L-lysyl-tRNA(Lys) + a 1,2-diacyl-sn-glycero-3-phospho-(1'-sn-glycerol) = a 1,2-diacyl-sn-glycero-3-phospho-1'-(3'-O-L-lysyl)-sn-glycerol + tRNA(Lys). Its function is as follows. Catalyzes the transfer of a lysyl group from L-lysyl-tRNA(Lys) to membrane-bound phosphatidylglycerol (PG), which produces lysylphosphatidylglycerol (LPG), one of the components of the bacterial membrane with a positive net charge. LPG synthesis contributes to the resistance to cationic antimicrobial peptides (CAMPs) and likely protects B.subtilis against its own CAMPs and against those produced by competiting microorganisms (bacteriocins). In fact, the modification of anionic phosphatidylglycerol with positively charged L-lysine results in repulsion of the peptides. The polypeptide is Phosphatidylglycerol lysyltransferase (mprF) (Bacillus subtilis (strain 168)).